The chain runs to 394 residues: Phosphoglycerate kinase (394 aa).

Substrate contacts are provided by residues 21-23 (DFN), arginine 36, 59-62 (HLGR), arginine 118, and arginine 151. The residue at position 183 (serine 183) is a Phosphoserine. ATP contacts are provided by lysine 201 and glycine 292. At threonine 299 the chain carries Phosphothreonine. ATP is bound by residues glutamate 323 and 350 to 353 (GGDS).

Belongs to the phosphoglycerate kinase family. In terms of assembly, monomer.

It is found in the cytoplasm. The catalysed reaction is (2R)-3-phosphoglycerate + ATP = (2R)-3-phospho-glyceroyl phosphate + ADP. It participates in carbohydrate degradation; glycolysis; pyruvate from D-glyceraldehyde 3-phosphate: step 2/5. This Bacillus mycoides (strain KBAB4) (Bacillus weihenstephanensis) protein is Phosphoglycerate kinase.